The following is a 1488-amino-acid chain: Neuropathy target esterase sws (1488 aa).

Over 1–34 (MDVLELLRASVNGCYNTLFSDAWSQYVSKQIATT) the chain is Lumenal. The chain crosses the membrane as a helical span at residues 35–55 (TYWYGALLAIGALFIAWFLYF). The Cytoplasmic segment spans residues 56–1488 (KRLASLRLRD…ENVTEADTKN (1433 aa)). Residue 175-302 (IFGHFEKPIF…IRVIQVIMIR (128 aa)) participates in a nucleoside 3',5'-cyclic phosphate binding. Disordered regions lie at residues 339 to 379 (PGPV…DPNP) and 402 to 440 (QQQQ…ATIT). 2 stretches are compositionally biased toward low complexity: residues 344–356 (SQAS…MASR) and 402–413 (QQQQSSGVSVGG). A compositionally biased stretch (polar residues) spans 415 to 424 (HRSSGACTPT). A nucleoside 3',5'-cyclic phosphate-binding positions include 458 to 587 (ELGL…VVRR) and 576 to 703 (IVLD…LSHR). The region spanning 929-1095 (LVLGGGGARG…VNNLPGHLWR (167 aa)) is the PNPLA domain. A GXGXXG motif is present at residues 933–938 (GGGARG). A GXSXG motif is present at residues 960 to 964 (GVSIG). Residue Ser962 is the Nucleophile of the active site. Asp1082 acts as the Proton acceptor in catalysis. Positions 1082-1084 (DGG) match the DGA/G motif. Ser1176 carries the post-translational modification Phosphoserine. 2 disordered regions span residues 1348–1376 (RKVD…QGNL) and 1398–1488 (EHKR…DTKN). Residues 1399–1410 (HKRRQKSKHKRD) show a composition bias toward basic residues. Positions 1440–1452 (IDAKLDQLRKLQQ) are enriched in basic and acidic residues. Acidic residues predominate over residues 1456–1470 (QGNESEQEQEQEQEQ).

This sequence belongs to the NTE family. As to quaternary structure, interacts with Pka-C3; interaction inhibits the catalytic function of Pka-C3 and the esterase activity of sws.

It localises to the endoplasmic reticulum membrane. It carries out the reaction a 1-acyl-sn-glycero-3-phosphocholine + H2O = sn-glycerol 3-phosphocholine + a fatty acid + H(+). Phospholipase B that deacylates intracellular phosphatidylcholine (PtdCho), generating glycerophosphocholine (GroPtdCho). This deacylation occurs at both sn-2 and sn-1 positions of PtdCho. Its specific chemical modification by certain organophosphorus (OP) compounds leads to distal axonopathy. Plays a role in the signaling mechanism between neurons and glia that regulates glia wrapping during development of the adult brain. Essential for membrane lipid homeostasis and cell survival in both neurons and glia of the adult brain. The polypeptide is Neuropathy target esterase sws (Drosophila mojavensis (Fruit fly)).